The following is a 164-amino-acid chain: ATP synthase subunit b (164 aa).

Residues 6-26 (GELVGNFILVTGSVIVLLLLI) form a helical membrane-spanning segment.

It belongs to the ATPase B chain family. As to quaternary structure, F-type ATPases have 2 components, F(1) - the catalytic core - and F(0) - the membrane proton channel. F(1) has five subunits: alpha(3), beta(3), gamma(1), delta(1), epsilon(1). F(0) has three main subunits: a(1), b(2) and c(10-14). The alpha and beta chains form an alternating ring which encloses part of the gamma chain. F(1) is attached to F(0) by a central stalk formed by the gamma and epsilon chains, while a peripheral stalk is formed by the delta and b chains.

The protein resides in the cell membrane. Functionally, f(1)F(0) ATP synthase produces ATP from ADP in the presence of a proton or sodium gradient. F-type ATPases consist of two structural domains, F(1) containing the extramembraneous catalytic core and F(0) containing the membrane proton channel, linked together by a central stalk and a peripheral stalk. During catalysis, ATP synthesis in the catalytic domain of F(1) is coupled via a rotary mechanism of the central stalk subunits to proton translocation. Component of the F(0) channel, it forms part of the peripheral stalk, linking F(1) to F(0). In Streptococcus pyogenes serotype M12 (strain MGAS2096), this protein is ATP synthase subunit b.